The following is a 289-amino-acid chain: Shikimate dehydrogenase (NADP(+)) (289 aa).

Shikimate contacts are provided by residues 19–21 (SLS) and Thr-66. Residue Lys-70 is the Proton acceptor of the active site. Residues Asn-91 and Asp-106 each coordinate shikimate. NADP(+) is bound by residues 131 to 135 (GNGGA) and Leu-229. Tyr-231 lines the shikimate pocket. Position 252 (Gly-252) interacts with NADP(+).

It belongs to the shikimate dehydrogenase family. In terms of assembly, homodimer.

It catalyses the reaction shikimate + NADP(+) = 3-dehydroshikimate + NADPH + H(+). The protein operates within metabolic intermediate biosynthesis; chorismate biosynthesis; chorismate from D-erythrose 4-phosphate and phosphoenolpyruvate: step 4/7. Functionally, involved in the biosynthesis of the chorismate, which leads to the biosynthesis of aromatic amino acids. Catalyzes the reversible NADPH linked reduction of 3-dehydroshikimate (DHSA) to yield shikimate (SA). This is Shikimate dehydrogenase (NADP(+)) from Trichormus variabilis (strain ATCC 29413 / PCC 7937) (Anabaena variabilis).